Reading from the N-terminus, the 287-residue chain is 4-diphosphocytidyl-2-C-methyl-D-erythritol kinase (287 aa).

Lys-12 is a catalytic residue. 94 to 104 (PAQAGMGGGSS) is an ATP binding site. Asp-136 is a catalytic residue.

It belongs to the GHMP kinase family. IspE subfamily.

The enzyme catalyses 4-CDP-2-C-methyl-D-erythritol + ATP = 4-CDP-2-C-methyl-D-erythritol 2-phosphate + ADP + H(+). It participates in isoprenoid biosynthesis; isopentenyl diphosphate biosynthesis via DXP pathway; isopentenyl diphosphate from 1-deoxy-D-xylulose 5-phosphate: step 3/6. Functionally, catalyzes the phosphorylation of the position 2 hydroxy group of 4-diphosphocytidyl-2C-methyl-D-erythritol. The polypeptide is 4-diphosphocytidyl-2-C-methyl-D-erythritol kinase (Albidiferax ferrireducens (strain ATCC BAA-621 / DSM 15236 / T118) (Rhodoferax ferrireducens)).